Consider the following 173-residue polypeptide: Adenine phosphoribosyltransferase (173 aa).

Belongs to the purine/pyrimidine phosphoribosyltransferase family. As to quaternary structure, homodimer.

Its subcellular location is the cytoplasm. The catalysed reaction is AMP + diphosphate = 5-phospho-alpha-D-ribose 1-diphosphate + adenine. Its pathway is purine metabolism; AMP biosynthesis via salvage pathway; AMP from adenine: step 1/1. Functionally, catalyzes a salvage reaction resulting in the formation of AMP, that is energically less costly than de novo synthesis. The chain is Adenine phosphoribosyltransferase from Listeria monocytogenes serotype 4b (strain CLIP80459).